The following is a 389-amino-acid chain: Tubby-like F-box protein 11 (389 aa).

An F-box domain is found at 36–82; sequence DYRWSEIPEELLREILIRVEAADGGGWPSRRSVVACAGVCRGWRLLM. The tract at residues 250-289 is disordered; that stretch reads STMEPQGVASEPSEFPLLGTRSTLSRSQSKPLRSSSSHLK. Positions 273 to 286 are enriched in low complexity; it reads LSRSQSKPLRSSSS.

This sequence belongs to the TUB family. In terms of tissue distribution, ubiquitous.

The polypeptide is Tubby-like F-box protein 11 (Arabidopsis thaliana (Mouse-ear cress)).